Reading from the N-terminus, the 502-residue chain is Cytochrome P450 monooxygenase orf6 (502 aa).

Residues 3–25 (ALWVLAVALVAYFLCLSIYRLFL) traverse the membrane as a helical segment. Residue Asn382 is glycosylated (N-linked (GlcNAc...) asparagine). Residue Cys445 participates in heme binding.

Belongs to the cytochrome P450 family. Heme serves as cofactor.

Its subcellular location is the membrane. The protein operates within mycotoxin biosynthesis. In terms of biological role, cytochrome P450 monooxygenase; part of the gene cluster that mediates the biosynthesis of brefeldin A (BFA), a protein transport inhibitor that shows antiviral, antifungal, and antitumor properties. The proposed biosynthesis of BFA involves formation of an acyclic polyketide chain that is differentially tailored throughout the backbone. The highly reducing polyketide synthase Bref-PKS is proposed to synthesize the precisely reduced octaketide precursor, which could then be directly offloaded by the thiohydrolase enzyme Bref-TH followed by a cytochrome P450 monooxygenase-mediated formation of the cyclopentane ring and macrocyclization to afford 7-deoxy BFA. Alternatively, the first ring annulation can also occur on the ACP-tethered intermediate before the thiohydrolase release and lactonization. The C7-hydroxylation by another cytochrome P450 monooxygenase is believed to be the final step in the process to obtain the final structure of BFA. In addition to the HRPKS Bref-PKS and the thiohydrolase Bref-TH, the brefeldin A biosynthesis cluster contains 4 cytochrome p450 monooxygenases (called orf3 to orf6), as well a the probable cluster-specific transcription regulator orf8. The protein is Cytochrome P450 monooxygenase orf6 of Eupenicillium brefeldianum (Penicillium brefeldianum).